Consider the following 310-residue polypeptide: Coproporphyrin III ferrochelatase (310 aa).

Residues Tyr13, Arg30, 46–47 (RY), Ser54, and Tyr125 each bind Fe-coproporphyrin III. The Fe(2+) site is built by His183 and Glu264.

It belongs to the ferrochelatase family.

It is found in the cytoplasm. The catalysed reaction is Fe-coproporphyrin III + 2 H(+) = coproporphyrin III + Fe(2+). It functions in the pathway porphyrin-containing compound metabolism; protoheme biosynthesis. In terms of biological role, involved in coproporphyrin-dependent heme b biosynthesis. Catalyzes the insertion of ferrous iron into coproporphyrin III to form Fe-coproporphyrin III. This chain is Coproporphyrin III ferrochelatase, found in Geobacillus sp. (strain WCH70).